We begin with the raw amino-acid sequence, 505 residues long: tRNA-2-methylthio-N(6)-dimethylallyladenosine synthase (505 aa).

Residues 14–132 (RTYEVRTYGC…LPVLLERARV (119 aa)) enclose the MTTase N-terminal domain. [4Fe-4S] cluster is bound by residues cysteine 23, cysteine 61, cysteine 95, cysteine 169, cysteine 173, and cysteine 176. Residues 155–386 (RESAYAAWVS…ALQEEISWEE (232 aa)) form the Radical SAM core domain. In terms of domain architecture, TRAM spans 388 to 456 (KKQVGRTLEL…PHHLLAEGPV (69 aa)).

It belongs to the methylthiotransferase family. MiaB subfamily. As to quaternary structure, monomer. The cofactor is [4Fe-4S] cluster.

It localises to the cytoplasm. The catalysed reaction is N(6)-dimethylallyladenosine(37) in tRNA + (sulfur carrier)-SH + AH2 + 2 S-adenosyl-L-methionine = 2-methylsulfanyl-N(6)-dimethylallyladenosine(37) in tRNA + (sulfur carrier)-H + 5'-deoxyadenosine + L-methionine + A + S-adenosyl-L-homocysteine + 2 H(+). Catalyzes the methylthiolation of N6-(dimethylallyl)adenosine (i(6)A), leading to the formation of 2-methylthio-N6-(dimethylallyl)adenosine (ms(2)i(6)A) at position 37 in tRNAs that read codons beginning with uridine. The polypeptide is tRNA-2-methylthio-N(6)-dimethylallyladenosine synthase (Streptomyces viridosporus (strain ATCC 14672 / DSM 40746 / JCM 4963 / KCTC 9882 / NRRL B-12104 / FH 1290) (Streptomyces ghanaensis)).